The sequence spans 296 residues: Outer surface protein B (296 aa).

Residues 1–15 (MRLLIGFALALALIG) form the signal peptide. Residue Cys16 is the site of N-palmitoyl cysteine attachment. Cys16 is lipidated: S-diacylglycerol cysteine. A disordered region spans residues 25–51 (GSQKENDLNLEDSSKKSHQNAKQDLPA). The segment covering 28 to 39 (KENDLNLEDSSK) has biased composition (basic and acidic residues).

The protein resides in the cell outer membrane. This Borreliella burgdorferi (strain ATCC 35210 / DSM 4680 / CIP 102532 / B31) (Borrelia burgdorferi) protein is Outer surface protein B (ospB).